The chain runs to 197 residues: Recombination protein RecR (197 aa).

The C4-type zinc finger occupies 56–71 (CRLCNNFSEAEVCEVC). The Toprim domain occupies 79–174 (RQLAVVEMPA…KVSRLARGVP (96 aa)).

It belongs to the RecR family.

May play a role in DNA repair. It seems to be involved in an RecBC-independent recombinational process of DNA repair. It may act with RecF and RecO. This chain is Recombination protein RecR, found in Thiobacillus denitrificans (strain ATCC 25259 / T1).